Here is a 144-residue protein sequence, read N- to C-terminus: UPF0292 protein MA_4098 (144 aa).

The Toprim domain maps to 28 to 109 (GAVIIVEGKR…KPELQIRNKL (82 aa)). Mg(2+) contacts are provided by Glu-34, Asp-78, and Asp-80.

It belongs to the UPF0292 family. It depends on Mg(2+) as a cofactor.

This is UPF0292 protein MA_4098 from Methanosarcina acetivorans (strain ATCC 35395 / DSM 2834 / JCM 12185 / C2A).